The primary structure comprises 601 residues: Elongation factor 4 (601 aa).

Residues 6–188 form the tr-type G domain; that stretch reads SHIRNFSIIA…QIVHRVPAPE (183 aa). GTP contacts are provided by residues 18 to 23 and 135 to 138; these read DHGKST and NKID.

The protein belongs to the TRAFAC class translation factor GTPase superfamily. Classic translation factor GTPase family. LepA subfamily.

The protein localises to the cell inner membrane. The enzyme catalyses GTP + H2O = GDP + phosphate + H(+). In terms of biological role, required for accurate and efficient protein synthesis under certain stress conditions. May act as a fidelity factor of the translation reaction, by catalyzing a one-codon backward translocation of tRNAs on improperly translocated ribosomes. Back-translocation proceeds from a post-translocation (POST) complex to a pre-translocation (PRE) complex, thus giving elongation factor G a second chance to translocate the tRNAs correctly. Binds to ribosomes in a GTP-dependent manner. This Anaeromyxobacter sp. (strain K) protein is Elongation factor 4.